A 468-amino-acid polypeptide reads, in one-letter code: Phosphoglucosamine mutase (468 aa).

S112 functions as the Phosphoserine intermediate in the catalytic mechanism. Mg(2+) is bound by residues S112, D254, D256, and D258. Position 112 is a phosphoserine (S112).

Belongs to the phosphohexose mutase family. Requires Mg(2+) as cofactor. Activated by phosphorylation.

It carries out the reaction alpha-D-glucosamine 1-phosphate = D-glucosamine 6-phosphate. In terms of biological role, catalyzes the conversion of glucosamine-6-phosphate to glucosamine-1-phosphate. This Prochlorococcus marinus (strain MIT 9313) protein is Phosphoglucosamine mutase.